A 284-amino-acid chain; its full sequence is Tropomyosin Per a 7.0101 (284 aa).

Residues 22–266 are a coiled coil; that stretch reads ALLCEQQARD…EDELVHEKEK (245 aa).

The protein belongs to the tropomyosin family. As to quaternary structure, homodimer.

Functionally, tropomyosin, in association with the troponin complex, plays a central role in the calcium dependent regulation of muscle contraction. This chain is Tropomyosin Per a 7.0101, found in Periplaneta americana (American cockroach).